The following is a 111-amino-acid chain: uncharacterized protein (111 aa).

It localises to the cytoplasm. Its subcellular location is the nucleus. This is an uncharacterized protein from Schizosaccharomyces pombe (strain 972 / ATCC 24843) (Fission yeast).